The primary structure comprises 94 residues: Small ribosomal subunit protein bS16c (94 aa).

The protein belongs to the bacterial ribosomal protein bS16 family.

The protein localises to the plastid. It localises to the chloroplast. The chain is Small ribosomal subunit protein bS16c from Phalaenopsis aphrodite subsp. formosana (Moth orchid).